The following is a 220-amino-acid chain: Chloramphenicol acetyltransferase (220 aa).

Catalysis depends on His187, which acts as the Proton acceptor.

Belongs to the chloramphenicol acetyltransferase family. In terms of assembly, homotrimer.

The catalysed reaction is chloramphenicol + acetyl-CoA = chloramphenicol 3-acetate + CoA. This enzyme is an effector of chloramphenicol resistance in bacteria. This chain is Chloramphenicol acetyltransferase (cat86), found in Bacillus pumilus (Bacillus mesentericus).